A 188-amino-acid chain; its full sequence is Protein K (188 aa).

The protein is Protein K (K) of Escherichia coli.